We begin with the raw amino-acid sequence, 457 residues long: ATP synthase subunit beta (457 aa).

147–154 (GGAGVGKT) provides a ligand contact to ATP.

Belongs to the ATPase alpha/beta chains family. In terms of assembly, F-type ATPases have 2 components, CF(1) - the catalytic core - and CF(0) - the membrane proton channel. CF(1) has five subunits: alpha(3), beta(3), gamma(1), delta(1), epsilon(1). CF(0) has three main subunits: a(1), b(2) and c(9-12). The alpha and beta chains form an alternating ring which encloses part of the gamma chain. CF(1) is attached to CF(0) by a central stalk formed by the gamma and epsilon chains, while a peripheral stalk is formed by the delta and b chains.

It localises to the cell inner membrane. The catalysed reaction is ATP + H2O + 4 H(+)(in) = ADP + phosphate + 5 H(+)(out). In terms of biological role, produces ATP from ADP in the presence of a proton gradient across the membrane. The catalytic sites are hosted primarily by the beta subunits. This chain is ATP synthase subunit beta, found in Haemophilus influenzae (strain 86-028NP).